A 455-amino-acid polypeptide reads, in one-letter code: Phosphoglucosamine mutase (455 aa).

S104 (phosphoserine intermediate) is an active-site residue. Mg(2+) contacts are provided by S104, D243, D245, and D247. A Phosphoserine modification is found at S104.

This sequence belongs to the phosphohexose mutase family. The cofactor is Mg(2+). Post-translationally, activated by phosphorylation.

The enzyme catalyses alpha-D-glucosamine 1-phosphate = D-glucosamine 6-phosphate. In terms of biological role, catalyzes the conversion of glucosamine-6-phosphate to glucosamine-1-phosphate. This chain is Phosphoglucosamine mutase, found in Synechococcus sp. (strain CC9311).